Consider the following 297-residue polypeptide: N-acetylmuramic acid 6-phosphate etherase (297 aa).

One can recognise an SIS domain in the interval 55–218 (ITKHFKQGGR…STGAMVGIGK (164 aa)). The active-site Proton donor is Glu83. Residue Glu114 is part of the active site.

Belongs to the GCKR-like family. MurNAc-6-P etherase subfamily. Homodimer.

It catalyses the reaction N-acetyl-D-muramate 6-phosphate + H2O = N-acetyl-D-glucosamine 6-phosphate + (R)-lactate. Its pathway is amino-sugar metabolism; N-acetylmuramate degradation. In terms of biological role, specifically catalyzes the cleavage of the D-lactyl ether substituent of MurNAc 6-phosphate, producing GlcNAc 6-phosphate and D-lactate. This is N-acetylmuramic acid 6-phosphate etherase from Oenococcus oeni (strain ATCC BAA-331 / PSU-1).